The following is a 92-amino-acid chain: Small ribosomal subunit protein bS18A (92 aa).

It belongs to the bacterial ribosomal protein bS18 family. In terms of assembly, part of the 30S ribosomal subunit. Forms a tight heterodimer with protein bS6.

Its function is as follows. Binds as a heterodimer with protein bS6 to the central domain of the 16S rRNA, where it helps stabilize the platform of the 30S subunit. The sequence is that of Small ribosomal subunit protein bS18A from Cupriavidus pinatubonensis (strain JMP 134 / LMG 1197) (Cupriavidus necator (strain JMP 134)).